We begin with the raw amino-acid sequence, 317 residues long: Acetyl-coenzyme A carboxylase carboxyl transferase subunit alpha (317 aa).

A CoA carboxyltransferase C-terminal domain is found at 37 to 292; sequence QISQKLEDTK…EEYILKAFNE (256 aa).

It belongs to the AccA family. In terms of assembly, acetyl-CoA carboxylase is a heterohexamer composed of biotin carboxyl carrier protein (AccB), biotin carboxylase (AccC) and two subunits each of ACCase subunit alpha (AccA) and ACCase subunit beta (AccD).

It localises to the cytoplasm. It carries out the reaction N(6)-carboxybiotinyl-L-lysyl-[protein] + acetyl-CoA = N(6)-biotinyl-L-lysyl-[protein] + malonyl-CoA. The protein operates within lipid metabolism; malonyl-CoA biosynthesis; malonyl-CoA from acetyl-CoA: step 1/1. Component of the acetyl coenzyme A carboxylase (ACC) complex. First, biotin carboxylase catalyzes the carboxylation of biotin on its carrier protein (BCCP) and then the CO(2) group is transferred by the carboxyltransferase to acetyl-CoA to form malonyl-CoA. The polypeptide is Acetyl-coenzyme A carboxylase carboxyl transferase subunit alpha (Flavobacterium psychrophilum (strain ATCC 49511 / DSM 21280 / CIP 103535 / JIP02/86)).